A 152-amino-acid polypeptide reads, in one-letter code: Melatonin receptor type 1B (152 aa).

Residues 1-12 (HSFVYEKLFSLW) lie on the Cytoplasmic side of the membrane. A helical transmembrane segment spans residues 13 to 33 (NTILYVCLIWTLTVVATVPNF). Topologically, residues 34 to 57 (FVGSLEYDPRIYSCTFVQTVSSSY) are extracellular. A helical transmembrane segment spans residues 58–78 (TITVVVIHFILPITVVTFCYL). The Cytoplasmic segment spans residues 79-110 (RIWILVIQVRRKVKSEFKPRMKQSDFRNFLTM). Residues 111–131 (FVVFVIFAFCWAPLNFIGLAV) form a helical membrane-spanning segment. Residues 132–144 (SINPTEVAPKIPE) are Extracellular-facing. A helical membrane pass occupies residues 145 to 152 (WLFVVSYF).

It belongs to the G-protein coupled receptor 1 family.

It is found in the cell membrane. Functionally, high affinity receptor for melatonin. The activity of this receptor is mediated by pertussis toxin sensitive G proteins that inhibits adenylate cyclase activity. The sequence is that of Melatonin receptor type 1B (mtnr1b) from Xenopus laevis (African clawed frog).